A 145-amino-acid polypeptide reads, in one-letter code: UPF0735 ACT domain-containing protein CLD_1535 (145 aa).

One can recognise an ACT domain in the interval 69-144; the sequence is TIGLLLGHER…NVIKVDLIAM (76 aa).

The protein belongs to the UPF0735 family.

The sequence is that of UPF0735 ACT domain-containing protein CLD_1535 from Clostridium botulinum (strain Okra / Type B1).